A 690-amino-acid polypeptide reads, in one-letter code: Protein MODIFIED TRANSPORT TO THE VACUOLE 1 (690 aa).

Positions 20 to 150 (VTSDEDKVAP…PESINRRIEG (131 aa)) constitute a VHS domain. Disordered regions lie at residues 228 to 258 (DGNYGTSKNTTGGSWGHASGEASESSASVRV) and 518 to 551 (FSIDENNSNQKGSSSSTLPQDLFAMPSTTSHQAP). The segment covering 243–257 (GHASGEASESSASVR) has biased composition (low complexity). A compositionally biased stretch (polar residues) spans 520–536 (IDENNSNQKGSSSSTLP).

Binds to clathrin heavy chain. As to expression, expressed in inflorescence stems, stigmas, roots, roots meristems, embryos, and floral and leaf vasculatures, but absent from the floral abscission zone.

It localises to the golgi apparatus. The protein resides in the trans-Golgi network. Its subcellular location is the cytoplasmic vesicle. The protein localises to the clathrin-coated vesicle. In terms of biological role, mediates clathrin-dependent trafficking of vacuolar cargo from the trans-Golgi network (TGN). Promotes plant growth. This chain is Protein MODIFIED TRANSPORT TO THE VACUOLE 1, found in Arabidopsis thaliana (Mouse-ear cress).